The primary structure comprises 232 residues: MAKISKRRQAFAAKVDRQKLYAIDDALALVKECASAKFNESIDVAVQLGIDAKKSDQVVRGSVVLPAGTGKSVRVAVFAQGEKAEQARAAGAEVVGMEDLAEQIKAGQMDFDIVIASPDTMRIVGTLGQILGPRGLMPNPKVGTVTPDVATAVKNAKAGQVQFRVDKAGIIHATIGRASFEPAALRSNLSALIEALQKAKPATSKGVYLRKIALSSTMGVGVRVDQATLAAQ.

Belongs to the universal ribosomal protein uL1 family. Part of the 50S ribosomal subunit.

Functionally, binds directly to 23S rRNA. The L1 stalk is quite mobile in the ribosome, and is involved in E site tRNA release. In terms of biological role, protein L1 is also a translational repressor protein, it controls the translation of the L11 operon by binding to its mRNA. This Burkholderia multivorans (strain ATCC 17616 / 249) protein is Large ribosomal subunit protein uL1.